Reading from the N-terminus, the 152-residue chain is Protein IpgF (152 aa).

The first 17 residues, 1–17 (MSRFVFILLCFIPHLGR), serve as a signal peptide directing secretion.

Belongs to the IagB/IpgF/P19 family.

The sequence is that of Protein IpgF (ipgF) from Shigella flexneri.